We begin with the raw amino-acid sequence, 413 residues long: Eukaryotic initiation factor 4A-9 (413 aa).

Residues 40–68 (HSFDAMGLKENLLRGIYAYGFEKPSAIQQ) carry the Q motif motif. In terms of domain architecture, Helicase ATP-binding spans 71–241 (IVPFCKGLDV…RKFMNKPVRI (171 aa)). 84–91 (AQSGTGKT) lines the ATP pocket. The DEAD box signature appears at 189–192 (DEAD). One can recognise a Helicase C-terminal domain in the interval 252 to 413 (GIKQFYVNVD…ELPANVADLL (162 aa)).

Belongs to the DEAD box helicase family. eIF4A subfamily. In terms of assembly, eIF4F is a multi-subunit complex, the composition of which varies with external and internal environmental conditions. It is composed of at least EIF4A, EIF4E and EIF4G.

The enzyme catalyses ATP + H2O = ADP + phosphate + H(+). ATP-dependent RNA helicase which is a subunit of the eIF4F complex involved in cap recognition and is required for mRNA binding to ribosome. In the current model of translation initiation, eIF4A unwinds RNA secondary structures in the 5'-UTR of mRNAs which is necessary to allow efficient binding of the small ribosomal subunit, and subsequent scanning for the initiator codon. The chain is Eukaryotic initiation factor 4A-9 from Nicotiana tabacum (Common tobacco).